The following is an 81-amino-acid chain: uncharacterized protein (81 aa).

A mitochondrion-targeting transit peptide spans 1–20; that stretch reads MYSRVLSVAAIVTMALAVQA. Residues 27–53 form a disordered region; it reads YGNTTNSTGTTNGTNGTNTTTSSTATQ. Over residues 28–53 the composition is skewed to low complexity; the sequence is GNTTNSTGTTNGTNGTNTTTSSTATQ. Residues 59–79 form a helical membrane-spanning segment; sequence ITNFSSGAFVIAMIAVACSVM.

The protein resides in the mitochondrion membrane. This is an uncharacterized protein from Schizosaccharomyces pombe (strain 972 / ATCC 24843) (Fission yeast).